Consider the following 284-residue polypeptide: Bifunctional protein FolD 1 (284 aa).

NADP(+) is bound by residues 166-168 and I232; that span reads GAS.

Belongs to the tetrahydrofolate dehydrogenase/cyclohydrolase family. In terms of assembly, homodimer.

The catalysed reaction is (6R)-5,10-methylene-5,6,7,8-tetrahydrofolate + NADP(+) = (6R)-5,10-methenyltetrahydrofolate + NADPH. The enzyme catalyses (6R)-5,10-methenyltetrahydrofolate + H2O = (6R)-10-formyltetrahydrofolate + H(+). It participates in one-carbon metabolism; tetrahydrofolate interconversion. Functionally, catalyzes the oxidation of 5,10-methylenetetrahydrofolate to 5,10-methenyltetrahydrofolate and then the hydrolysis of 5,10-methenyltetrahydrofolate to 10-formyltetrahydrofolate. This Ectopseudomonas mendocina (strain ymp) (Pseudomonas mendocina) protein is Bifunctional protein FolD 1.